Consider the following 792-residue polypeptide: 5-methyltetrahydropteroyltriglutamate--homocysteine methyltransferase (792 aa).

5-methyltetrahydropteroyltri-L-glutamate-binding positions include 16 to 19 (RELK) and K112. L-homocysteine contacts are provided by residues 432-434 (IGS) and E485. L-methionine is bound by residues 432–434 (IGS) and E485. Residues 516-517 (RC) and W562 each bind 5-methyltetrahydropteroyltri-L-glutamate. Residue D600 coordinates L-homocysteine. D600 contacts L-methionine. Position 606 (E606) interacts with 5-methyltetrahydropteroyltri-L-glutamate. The Zn(2+) site is built by H642, C644, and E666. Catalysis depends on H695, which acts as the Proton donor. Residue C727 participates in Zn(2+) binding.

It belongs to the vitamin-B12 independent methionine synthase family. Requires Zn(2+) as cofactor.

The catalysed reaction is 5-methyltetrahydropteroyltri-L-glutamate + L-homocysteine = tetrahydropteroyltri-L-glutamate + L-methionine. The protein operates within amino-acid biosynthesis; L-methionine biosynthesis via de novo pathway; L-methionine from L-homocysteine (MetE route): step 1/1. In terms of biological role, catalyzes the transfer of a methyl group from 5-methyltetrahydrofolate to homocysteine resulting in methionine formation. The polypeptide is 5-methyltetrahydropteroyltriglutamate--homocysteine methyltransferase (Cupriavidus necator (strain ATCC 17699 / DSM 428 / KCTC 22496 / NCIMB 10442 / H16 / Stanier 337) (Ralstonia eutropha)).